A 388-amino-acid chain; its full sequence is Succinate--CoA ligase [ADP-forming] subunit beta (388 aa).

Residues 9–244 enclose the ATP-grasp domain; the sequence is KEIFRSMGVA…LEEEDPKEIE (236 aa). ATP is bound by residues Lys-46, 53-55, Glu-99, Cys-102, and Glu-107; that span reads GRG. Residues Asn-199 and Asp-213 each contribute to the Mg(2+) site. Residues Asn-264 and 321–323 contribute to the substrate site; that span reads GIM.

This sequence belongs to the succinate/malate CoA ligase beta subunit family. In terms of assembly, heterotetramer of two alpha and two beta subunits. It depends on Mg(2+) as a cofactor.

The catalysed reaction is succinate + ATP + CoA = succinyl-CoA + ADP + phosphate. It catalyses the reaction GTP + succinate + CoA = succinyl-CoA + GDP + phosphate. Its pathway is carbohydrate metabolism; tricarboxylic acid cycle; succinate from succinyl-CoA (ligase route): step 1/1. Succinyl-CoA synthetase functions in the citric acid cycle (TCA), coupling the hydrolysis of succinyl-CoA to the synthesis of either ATP or GTP and thus represents the only step of substrate-level phosphorylation in the TCA. The beta subunit provides nucleotide specificity of the enzyme and binds the substrate succinate, while the binding sites for coenzyme A and phosphate are found in the alpha subunit. The sequence is that of Succinate--CoA ligase [ADP-forming] subunit beta from Staphylococcus epidermidis (strain ATCC 35984 / DSM 28319 / BCRC 17069 / CCUG 31568 / BM 3577 / RP62A).